A 254-amino-acid chain; its full sequence is uncharacterized protein (254 aa).

The Acyl-thioester intermediate role is filled by C71. Residues H110 and D125 contribute to the active site.

It belongs to the arylamine N-acetyltransferase family.

This is an uncharacterized protein from Bacillus subtilis (strain 168).